Consider the following 380-residue polypeptide: Cytochrome b (380 aa).

A run of 4 helical transmembrane segments spans residues 34-54 (FGSLLGMCLILQITTGIFLAM), 78-99 (WLLRGLHANGASIFFICLYFHI), 114-134 (WYTGIMLLFLTMATAFMGYIL), and 179-199 (FFTLHFLTPFIISSLTTIHLL). Residues histidine 84 and histidine 98 each coordinate heme b. Residues histidine 183 and histidine 197 each coordinate heme b. Histidine 202 contributes to the a ubiquinone binding site. 4 helical membrane-spanning segments follow: residues 227–247 (YKDLLGVNLLMIGLLTLTLFL), 289–309 (LGGVLALLSSVTILFIMPTLH), 321–341 (FTQILFWSPTADLVILTWIGA), and 348–368 (FIMIGQTASVFYFTLILLLIP).

The protein belongs to the cytochrome b family. In terms of assembly, the cytochrome bc1 complex contains 3 respiratory subunits (MT-CYB, CYC1 and UQCRFS1), 2 core proteins (UQCRC1 and UQCRC2) and probably 6 low-molecular weight proteins. Heme b serves as cofactor.

The protein resides in the mitochondrion inner membrane. Functionally, component of the ubiquinol-cytochrome c reductase complex (complex III or cytochrome b-c1 complex) that is part of the mitochondrial respiratory chain. The b-c1 complex mediates electron transfer from ubiquinol to cytochrome c. Contributes to the generation of a proton gradient across the mitochondrial membrane that is then used for ATP synthesis. In Pelomedusa subrufa (African side-necked turtle), this protein is Cytochrome b (MT-CYB).